The chain runs to 94 residues: Pyrimidine/purine nucleoside phosphorylase (94 aa).

This sequence belongs to the nucleoside phosphorylase PpnP family.

It carries out the reaction a purine D-ribonucleoside + phosphate = a purine nucleobase + alpha-D-ribose 1-phosphate. The catalysed reaction is adenosine + phosphate = alpha-D-ribose 1-phosphate + adenine. It catalyses the reaction cytidine + phosphate = cytosine + alpha-D-ribose 1-phosphate. The enzyme catalyses guanosine + phosphate = alpha-D-ribose 1-phosphate + guanine. It carries out the reaction inosine + phosphate = alpha-D-ribose 1-phosphate + hypoxanthine. The catalysed reaction is thymidine + phosphate = 2-deoxy-alpha-D-ribose 1-phosphate + thymine. It catalyses the reaction uridine + phosphate = alpha-D-ribose 1-phosphate + uracil. The enzyme catalyses xanthosine + phosphate = alpha-D-ribose 1-phosphate + xanthine. Functionally, catalyzes the phosphorolysis of diverse nucleosides, yielding D-ribose 1-phosphate and the respective free bases. Can use uridine, adenosine, guanosine, cytidine, thymidine, inosine and xanthosine as substrates. Also catalyzes the reverse reactions. The polypeptide is Pyrimidine/purine nucleoside phosphorylase (Vibrio parahaemolyticus serotype O3:K6 (strain RIMD 2210633)).